A 301-amino-acid polypeptide reads, in one-letter code: Phosphoribosylaminoimidazole-succinocarboxamide synthase (301 aa).

Belongs to the SAICAR synthetase family.

The catalysed reaction is 5-amino-1-(5-phospho-D-ribosyl)imidazole-4-carboxylate + L-aspartate + ATP = (2S)-2-[5-amino-1-(5-phospho-beta-D-ribosyl)imidazole-4-carboxamido]succinate + ADP + phosphate + 2 H(+). It functions in the pathway purine metabolism; IMP biosynthesis via de novo pathway; 5-amino-1-(5-phospho-D-ribosyl)imidazole-4-carboxamide from 5-amino-1-(5-phospho-D-ribosyl)imidazole-4-carboxylate: step 1/2. The chain is Phosphoribosylaminoimidazole-succinocarboxamide synthase (ADE1) from Cyberlindnera jadinii (Torula yeast).